We begin with the raw amino-acid sequence, 374 residues long: Tuliposide A-converting enzyme b3, amyloplastic (374 aa).

The N-terminal 68 residues, 1 to 68, are a transit peptide targeting the amyloplast; sequence MSAALFCGPP…TNSSLSPSPT (68 aa). The active-site Acyl-ester intermediate is the S226. Residues D316 and H348 each act as charge relay system in the active site.

This sequence belongs to the AB hydrolase superfamily. As to quaternary structure, homodimer. Highly expressed in pistil and bulb scales. Lower expression in stem, and barely detected in root, leaf, petal and stamen.

It is found in the plastid. The protein localises to the amyloplast. It catalyses the reaction 6-tuliposide A = tulipalin A + D-glucose. Lactone-forming carboxylesterases, specifically catalyzing intramolecular transesterification, but not hydrolysis. Involved in the biosynthesis of tulipalins, defensive chemicals that show antimicrobial activities against a broad range of strains of bacteria and fungi. Substrates are 6-tuliposide A &gt; 6-tuliposide B. In Tulipa gesneriana (Garden tulip), this protein is Tuliposide A-converting enzyme b3, amyloplastic (TCEA-B3).